Here is a 307-residue protein sequence, read N- to C-terminus: UDP-3-O-acyl-N-acetylglucosamine deacetylase (307 aa).

The Zn(2+) site is built by His-78, His-241, and Asp-245. The active-site Proton donor is the His-268.

The protein belongs to the LpxC family. It depends on Zn(2+) as a cofactor.

The catalysed reaction is a UDP-3-O-[(3R)-3-hydroxyacyl]-N-acetyl-alpha-D-glucosamine + H2O = a UDP-3-O-[(3R)-3-hydroxyacyl]-alpha-D-glucosamine + acetate. Its pathway is glycolipid biosynthesis; lipid IV(A) biosynthesis; lipid IV(A) from (3R)-3-hydroxytetradecanoyl-[acyl-carrier-protein] and UDP-N-acetyl-alpha-D-glucosamine: step 2/6. Catalyzes the hydrolysis of UDP-3-O-myristoyl-N-acetylglucosamine to form UDP-3-O-myristoylglucosamine and acetate, the committed step in lipid A biosynthesis. The chain is UDP-3-O-acyl-N-acetylglucosamine deacetylase from Variovorax paradoxus (strain S110).